A 931-amino-acid chain; its full sequence is Envelope glycoprotein B (931 aa).

Positions 1-71 (MSPCGYYSKW…FSMFVTAVVS (71 aa)) are cleaved as a signal peptide. Residues 72-786 (VSPSSFYESL…HGFTTFLSNP (715 aa)) lie on the Virion surface side of the membrane. Disulfide bonds link C122/C584, C139/C540, C213/C277, C369/C417, and C608/C645. The N-linked (GlcNAc...) asparagine; by host glycan is linked to N147. The involved in fusion and/or binding to host membrane stretch occupies residues 179–185 (AWAGSSY). An N-linked (GlcNAc...) asparagine; by host glycan is attached at N257. The involved in fusion and/or binding to host membrane stretch occupies residues 264–271 (GTPGTYRT). N-linked (GlcNAc...) asparagine; by host glycosylation is found at N435, N503, N620, and N686. Hydrophobic membrane proximal region stretches follow at residues 731–784 (IDKV…TFLS) and 764–784 (VVLGATGALLSTVHGFTTFLS). A helical membrane pass occupies residues 787–807 (FGALAVGLLVLAGLVAAFFAY). Residues 808–931 (RYVLKLKTSP…RVRTENVTGV (124 aa)) are Intravirion-facing. The short motif at 881 to 884 (YMTL) is the Golgi targeting element. Positions 920 to 923 (YSRV) match the Internalization motif motif.

It belongs to the herpesviridae glycoprotein B family. Homotrimer; disulfide-linked. Binds to heparan sulfate proteoglycans. Interacts with gH/gL heterodimer. In terms of processing, a proteolytic cleavage by host furin generates two subunits that remain linked by disulfide bonds.

The protein resides in the virion membrane. It localises to the host cell membrane. The protein localises to the host endosome membrane. It is found in the host Golgi apparatus membrane. Functionally, envelope glycoprotein that forms spikes at the surface of virion envelope. Essential for the initial attachment to heparan sulfate moieties of the host cell surface proteoglycans. Involved in fusion of viral and cellular membranes leading to virus entry into the host cell. Following initial binding to its host receptors, membrane fusion is mediated by the fusion machinery composed at least of gB and the heterodimer gH/gL. May be involved in the fusion between the virion envelope and the outer nuclear membrane during virion egress. The protein is Envelope glycoprotein B of Varicella-zoster virus (strain Oka vaccine) (HHV-3).